The chain runs to 252 residues: Phosphoglycolate phosphatase (252 aa).

Asp-13 serves as the catalytic Nucleophile. 3 residues coordinate Mg(2+): Asp-13, Asp-15, and Asp-192.

This sequence belongs to the HAD-like hydrolase superfamily. CbbY/CbbZ/Gph/YieH family. In terms of assembly, monomer. The cofactor is Mg(2+). It depends on chloride as a cofactor.

The catalysed reaction is 2-phosphoglycolate + H2O = glycolate + phosphate. The protein operates within organic acid metabolism; glycolate biosynthesis; glycolate from 2-phosphoglycolate: step 1/1. Functionally, specifically catalyzes the dephosphorylation of 2-phosphoglycolate. Is involved in the dissimilation of the intracellular 2-phosphoglycolate formed during the DNA repair of 3'-phosphoglycolate ends, a major class of DNA lesions induced by oxidative stress. The protein is Phosphoglycolate phosphatase of Shigella flexneri.